The following is a 482-amino-acid chain: Transcription termination/antitermination protein NusA (482 aa).

One can recognise an S1 motif domain in the interval 133–197 (NKVVIGYVQQ…NGIEVILSRT (65 aa)). A KH domain is found at 300–446 (LHKALVVVSD…NDNDESMEKV (147 aa)).

Belongs to the NusA family. In terms of assembly, monomer. Binds directly to the core enzyme of the DNA-dependent RNA polymerase and to nascent RNA.

The protein localises to the cytoplasm. Participates in both transcription termination and antitermination. The chain is Transcription termination/antitermination protein NusA from Borreliella burgdorferi (strain ATCC 35210 / DSM 4680 / CIP 102532 / B31) (Borrelia burgdorferi).